The sequence spans 183 residues: Microfibrillar-associated protein 2 (183 aa).

Positions 1 to 17 (MRAASLFLLFLPAGLLA) are cleaved as a signal peptide. A Pyrrolidone carboxylic acid modification is found at Gln-18. An Isoglutamyl lysine isopeptide (Gln-Lys) (interchain with K-?) cross-link involves residue Gln-20. Tyr-47, Tyr-48, and Tyr-50 each carry sulfotyrosine. One can recognise a ShKT domain in the interval 153–183 (CRDKFSKCGVLASSGLCQSVAAACARSCGGC). 3 disulfide bridges follow: Cys-153/Cys-183, Cys-160/Cys-176, and Cys-169/Cys-180.

The protein belongs to the MFAP family. As to quaternary structure, forms a ternary complex with BGN and ELN. Interacts with FBN1 (via N-terminal domain) and FBN2. Post-translationally, O-glycosylated; glycans consist of Gal(beta1-3)GalNAc. In terms of processing, forms intermolecular disulfide bonds either with other MAGP-1 molecules or with other components of the microfibrils. Forms transglutaminase cross-links with tropoelastin.

It localises to the secreted. The protein localises to the extracellular space. The protein resides in the extracellular matrix. In terms of biological role, component of the elastin-associated microfibrils. The sequence is that of Microfibrillar-associated protein 2 (MFAP2) from Bos taurus (Bovine).